The following is a 187-amino-acid chain: Pumilio homolog 26 (187 aa).

The stretch at 20 to 42 is one Pumilio 1; degenerate repeat; that stretch reads VATEFLRVSNDVAELHKLSSKLT. The stretch at 43–78 is one Pumilio 2; degenerate repeat; the sequence is SDPYLFVEFVKTIRGFLSVQTALGLSGEIDTVFLQV. The Pumilio 3; degenerate repeat unit spans residues 79–116; it reads IKGWFPDLITETFSFLIVVRIINLFNKRANSKVYPDIL. A Pumilio 4; degenerate repeat occupies 117-154; the sequence is RRIGNNALYLTRNPLRGICLVEKAINVRDPDCTVFIAL. The Pumilio 5 repeat unit spans residues 155–187; the sequence is KLHSHYVELSFEELGSNIVEKLLSVGESGICGV.

It is found in the cytoplasm. In terms of biological role, sequence-specific RNA-binding protein that regulates translation and mRNA stability by binding the 3'-UTR of target mRNAs. The chain is Pumilio homolog 26 (APUM26) from Arabidopsis thaliana (Mouse-ear cress).